The chain runs to 312 residues: HPr kinase/phosphorylase (312 aa).

Catalysis depends on residues His-139 and Lys-160. Residue 154–161 (GDSGIGKS) coordinates ATP. A Mg(2+)-binding site is contributed by Ser-161. Catalysis depends on Asp-178, which acts as the Proton acceptor; for phosphorylation activity. Proton donor; for dephosphorylation activity. Positions 202 to 211 (IEIRGVGIID) are important for the catalytic mechanism of both phosphorylation and dephosphorylation. Residue Glu-203 participates in Mg(2+) binding. Arg-244 is a catalytic residue. The segment at 265–270 (PVKTGR) is important for the catalytic mechanism of dephosphorylation.

This sequence belongs to the HPrK/P family. As to quaternary structure, homohexamer. It depends on Mg(2+) as a cofactor.

It carries out the reaction [HPr protein]-L-serine + ATP = [HPr protein]-O-phospho-L-serine + ADP + H(+). The enzyme catalyses [HPr protein]-O-phospho-L-serine + phosphate + H(+) = [HPr protein]-L-serine + diphosphate. Catalyzes the ATP- as well as the pyrophosphate-dependent phosphorylation of a specific serine residue in HPr, a phosphocarrier protein of the phosphoenolpyruvate-dependent sugar phosphotransferase system (PTS). HprK/P also catalyzes the pyrophosphate-producing, inorganic phosphate-dependent dephosphorylation (phosphorolysis) of seryl-phosphorylated HPr (P-Ser-HPr). The two antagonistic activities of HprK/P are regulated by several intracellular metabolites, which change their concentration in response to the absence or presence of rapidly metabolisable carbon sources (glucose, fructose, etc.) in the growth medium. Therefore, by controlling the phosphorylation state of HPr, HPrK/P is a sensor enzyme that plays a major role in the regulation of carbon metabolism and sugar transport: it mediates carbon catabolite repression (CCR), and regulates PTS-catalyzed carbohydrate uptake and inducer exclusion. The polypeptide is HPr kinase/phosphorylase (Streptococcus pneumoniae (strain ATCC BAA-255 / R6)).